We begin with the raw amino-acid sequence, 238 residues long: Cysteine-rich venom protein pseudechetoxin (238 aa).

Residues 1–19 form the signal peptide; that stretch reads MIAFIVLLSLAAVLQQSSG. A propeptide spanning residues 20–27 is cleaved from the precursor; the sequence is TADFASES. Residues 38–164 form the SCP domain; it reads VDKHNALRRS…SSKYLYVCQY (127 aa). Thr-51 and Ser-106 together coordinate Zn(2+). Cystine bridges form between Cys-75–Cys-153, Cys-92–Cys-165, Cys-148–Cys-162, Cys-184–Cys-191, Cys-187–Cys-196, Cys-200–Cys-233, Cys-209–Cys-227, and Cys-218–Cys-231. The region spanning 200 to 233 is the ShKT domain; the sequence is CKRNNDFSNCKSLAKKSKCQTEWIKKKCPASCFC.

Expressed by the venom gland.

The protein localises to the secreted. Its function is as follows. Blocks olfactory (CNGA2) and retinal (CNGA1) cyclic nucleotide-gated (CNG) ion channel currents. Does not inhibit retinal (CNGA3) currents. It forms high-affinity contacts with the pore turret region and most likely inhibits CNG channel current by blocking the external entrance to the transmembrane pore. Is really more potent that Pseudecin. Does not affect neither depolarization- nor caffeine-induced contraction arterial smooth muscle. This Pseudechis australis (Mulga snake) protein is Cysteine-rich venom protein pseudechetoxin.